We begin with the raw amino-acid sequence, 390 residues long: RNA binding protein fox-1 homolog 2 (390 aa).

Residues 1 to 127 form a disordered region; the sequence is MQNEPLTPGY…STPKRLHVSN (127 aa). Polar residues-rich tracts occupy residues 18 to 28 and 65 to 95; these read SQGNQEPTTTP and GEHN…SLTT. The residue at position 67 (histidine 67) is a Phosphothreonine. The segment covering 97-117 has biased composition (low complexity); the sequence is GGAQTDGQQSQTQSSENSESK. The RRM domain occupies 121–197; it reads KRLHVSNIPF…RKIEVNNATA (77 aa). Residues glycine 249, glycine 267, phenylalanine 268, alanine 277, and arginine 281 each carry the omega-N-methylarginine modification. Arginine 297 and arginine 329 each carry asymmetric dimethylarginine. Residues arginine 381 and arginine 386 each carry the asymmetric dimethylarginine; alternate modification. Omega-N-methylarginine; alternate is present on residues arginine 381 and arginine 386.

As to quaternary structure, interacts with ER-alpha N-terminal activation domain. Interacts with RBPMS; the interaction allows cooperative assembly of stable cell-specific alternative splicing regulatory complexes.

It is found in the nucleus. It localises to the cytoplasm. Functionally, RNA-binding protein that regulates alternative splicing events by binding to 5'-UGCAUGU-3' elements. Prevents binding of U2AF2 to the 3'-splice site. Regulates alternative splicing of tissue-specific exons and of differentially spliced exons during erythropoiesis. RNA-binding protein that seems to act as a coregulatory factor of ER-alpha. Together with RNA binding proteins RBPMS and MBNL1/2, activates vascular smooth muscle cells alternative splicing events. The chain is RNA binding protein fox-1 homolog 2 (RBFOX2) from Homo sapiens (Human).